We begin with the raw amino-acid sequence, 450 residues long: Phosphoglucosamine mutase (450 aa).

Serine 101 acts as the Phosphoserine intermediate in catalysis. Positions 101, 240, 242, and 244 each coordinate Mg(2+). Serine 101 carries the post-translational modification Phosphoserine.

The protein belongs to the phosphohexose mutase family. Requires Mg(2+) as cofactor. In terms of processing, activated by phosphorylation.

The catalysed reaction is alpha-D-glucosamine 1-phosphate = D-glucosamine 6-phosphate. Its function is as follows. Catalyzes the conversion of glucosamine-6-phosphate to glucosamine-1-phosphate. The sequence is that of Phosphoglucosamine mutase from Streptococcus sanguinis (strain SK36).